We begin with the raw amino-acid sequence, 162 residues long: Lipoprotein signal peptidase (162 aa).

4 consecutive transmembrane segments (helical) span residues 9-29, 39-59, 66-86, and 95-115; these read LCLV…LVAT, VIHG…FGLF, VRKF…LWLY, and VLSF…IDRF. Residues D122 and D140 contribute to the active site. The helical transmembrane segment at 136-156 threads the bilayer; it reads FNVADSAITIGMVVFVYHVIF.

The protein belongs to the peptidase A8 family.

The protein localises to the cell inner membrane. It catalyses the reaction Release of signal peptides from bacterial membrane prolipoproteins. Hydrolyzes -Xaa-Yaa-Zaa-|-(S,diacylglyceryl)Cys-, in which Xaa is hydrophobic (preferably Leu), and Yaa (Ala or Ser) and Zaa (Gly or Ala) have small, neutral side chains.. The protein operates within protein modification; lipoprotein biosynthesis (signal peptide cleavage). Functionally, this protein specifically catalyzes the removal of signal peptides from prolipoproteins. The sequence is that of Lipoprotein signal peptidase from Desulforapulum autotrophicum (strain ATCC 43914 / DSM 3382 / VKM B-1955 / HRM2) (Desulfobacterium autotrophicum).